The following is a 565-amino-acid chain: Maturase K (565 aa).

The protein belongs to the intron maturase 2 family. MatK subfamily.

It localises to the plastid. Its subcellular location is the chloroplast. In terms of biological role, usually encoded in the trnK tRNA gene intron. Probably assists in splicing its own and other chloroplast group II introns. In Staurastrum punctulatum (Green alga), this protein is Maturase K.